We begin with the raw amino-acid sequence, 454 residues long: tRNA modification GTPase MnmE (454 aa).

(6S)-5-formyl-5,6,7,8-tetrahydrofolate contacts are provided by Arg23, Glu80, and Lys120. Residues 216 to 377 enclose the TrmE-type G domain; the sequence is GMKVVIAGRP…LRNHLKQSMG (162 aa). K(+) is bound at residue Asn226. GTP contacts are provided by residues 226–231, 245–251, 270–273, 335–338, and 358–360; these read NAGKSS, TDIAGTT, DTAG, NKAD, and SAR. Ser230 lines the Mg(2+) pocket. Thr245, Ile247, and Thr250 together coordinate K(+). Thr251 provides a ligand contact to Mg(2+). (6S)-5-formyl-5,6,7,8-tetrahydrofolate is bound at residue Lys454.

The protein belongs to the TRAFAC class TrmE-Era-EngA-EngB-Septin-like GTPase superfamily. TrmE GTPase family. As to quaternary structure, homodimer. Heterotetramer of two MnmE and two MnmG subunits. The cofactor is K(+).

The protein resides in the cytoplasm. Its function is as follows. Exhibits a very high intrinsic GTPase hydrolysis rate. Involved in the addition of a carboxymethylaminomethyl (cmnm) group at the wobble position (U34) of certain tRNAs, forming tRNA-cmnm(5)s(2)U34. The sequence is that of tRNA modification GTPase MnmE from Escherichia coli (strain 55989 / EAEC).